Reading from the N-terminus, the 60-residue chain is Acrosin (60 aa).

An N-linked (GlcNAc...) asparagine glycan is attached at asparagine 3. The 37-residue stretch at isoleucine 24–leucine 60 folds into the Peptidase S1 domain.

Belongs to the peptidase S1 family. As to quaternary structure, heavy chain (catalytic) and a light chain linked by two disulfide bonds. Forms a heterodimer with SERPINA5.

It catalyses the reaction Preferential cleavage: Arg-|-Xaa, Lys-|-Xaa.. With respect to regulation, inhibited by SERPINA5. Acrosin is the major protease of mammalian spermatozoa. It is a serine protease of trypsin-like cleavage specificity, it is synthesized in a zymogen form, proacrosin and stored in the acrosome. This is Acrosin (ACR) from Capra hircus (Goat).